The primary structure comprises 165 residues: Cytochrome c-type biogenesis protein CcmE (165 aa).

Residues 1–29 lie on the Cytoplasmic side of the membrane; that stretch reads MSATAEQNARNPKGKGGFARTVSQRKRKR. The chain crosses the membrane as a helical; Signal-anchor for type II membrane protein span at residues 30–50; the sequence is LFLIGGALAVLAVAVGLMLTA. The Periplasmic portion of the chain corresponds to 51-165; the sequence is FNQDIRFFRT…LKKKGVWEGK (115 aa). Heme is bound by residues His-143 and Tyr-147.

Belongs to the CcmE/CycJ family.

It localises to the cell inner membrane. Heme chaperone required for the biogenesis of c-type cytochromes. Transiently binds heme delivered by CcmC and transfers the heme to apo-cytochromes in a process facilitated by CcmF and CcmH. This is Cytochrome c-type biogenesis protein CcmE from Brucella abortus (strain S19).